A 203-amino-acid chain; its full sequence is MATLDSNDKHDNHAPEAAGEFVSLRDHFLIAMPGLQDPIFSRSLTYICDHTAQGAMGIVVNQPMNLTLGDIFEQLELQDKAQQAGRAVLAGGPVNTERGFVLHRDSGAWESTMHIAPDVNLTASRDIVHAIANNTGPKSSLFALGYAGWSAGQLEEEISANSWLTIPADSSIIFDIPVEDRWAAAARQLGIDIHLMSATAGHA.

The protein belongs to the UPF0301 (AlgH) family.

The protein is UPF0301 protein Sde_3637 of Saccharophagus degradans (strain 2-40 / ATCC 43961 / DSM 17024).